Consider the following 448-residue polypeptide: Homogentisate 1,2-dioxygenase (448 aa).

Residue His-303 is the Proton acceptor of the active site. Fe cation-binding residues include His-346 and Glu-352. Positions 361 and 382 each coordinate homogentisate. His-382 lines the Fe cation pocket.

This sequence belongs to the homogentisate dioxygenase family. Hexamer; dimer of trimers. It depends on Fe cation as a cofactor.

The catalysed reaction is homogentisate + O2 = 4-maleylacetoacetate + H(+). Its pathway is amino-acid degradation; L-phenylalanine degradation; acetoacetate and fumarate from L-phenylalanine: step 4/6. Involved in the catabolism of homogentisate (2,5-dihydroxyphenylacetate or 2,5-OH-PhAc), a central intermediate in the degradation of phenylalanine and tyrosine. Catalyzes the oxidative ring cleavage of the aromatic ring of homogentisate to yield maleylacetoacetate. This Bradyrhizobium diazoefficiens (strain JCM 10833 / BCRC 13528 / IAM 13628 / NBRC 14792 / USDA 110) protein is Homogentisate 1,2-dioxygenase.